Consider the following 326-residue polypeptide: 4-hydroxythreonine-4-phosphate dehydrogenase (326 aa).

Residues histidine 130 and threonine 131 each contribute to the substrate site. The a divalent metal cation site is built by histidine 160, histidine 205, and histidine 260. Positions 268, 277, and 286 each coordinate substrate.

It belongs to the PdxA family. In terms of assembly, homodimer. Requires Zn(2+) as cofactor. Mg(2+) serves as cofactor. The cofactor is Co(2+).

The protein resides in the cytoplasm. The enzyme catalyses 4-(phosphooxy)-L-threonine + NAD(+) = 3-amino-2-oxopropyl phosphate + CO2 + NADH. The protein operates within cofactor biosynthesis; pyridoxine 5'-phosphate biosynthesis; pyridoxine 5'-phosphate from D-erythrose 4-phosphate: step 4/5. Functionally, catalyzes the NAD(P)-dependent oxidation of 4-(phosphooxy)-L-threonine (HTP) into 2-amino-3-oxo-4-(phosphooxy)butyric acid which spontaneously decarboxylates to form 3-amino-2-oxopropyl phosphate (AHAP). This chain is 4-hydroxythreonine-4-phosphate dehydrogenase, found in Aromatoleum aromaticum (strain DSM 19018 / LMG 30748 / EbN1) (Azoarcus sp. (strain EbN1)).